The following is a 403-amino-acid chain: Na(+)/H(+) antiporter NhaH (403 aa).

Residues 1-6 are Cytoplasmic-facing; that stretch reads MHGFHD. A helical transmembrane segment spans residues 7-27; it reads VFIQILLLLAISVSVIAIAKL. Over 28 to 30 the chain is Extracellular; the sequence is LKE. Residues 31-51 traverse the membrane as a helical segment; the sequence is PDSIALVLVGLVLGLTELPII. Over 52–65 the chain is Cytoplasmic; sequence EDAERYITQSEVFQ. A helical transmembrane segment spans residues 66 to 86; the sequence is ATIISLFLPILLGDATLKLPF. Residues 87 to 98 lie on the Extracellular side of the membrane; it reads HHLFSQKKTVLG. The helical transmembrane segment at 99–119 threads the bilayer; that stretch reads LAFVGTFVSSICIGTAAYFLL. The Cytoplasmic portion of the chain corresponds to 120–124; the sequence is DLPLA. A helical membrane pass occupies residues 125–145; that stretch reads VAFTFAALMSATDPISVLSIF. Residues 146–167 lie on the Extracellular side of the membrane; sequence KSLGVPQKMSTVMEGESLFNDG. The chain crosses the membrane as a helical span at residues 168–188; that stretch reads IAVVLFKIASIYLLTYMEMGW. Topologically, residues 189-195 are cytoplasmic; sequence AGLGSGV. Residues 196-216 form a helical membrane-spanning segment; that stretch reads FLFLKFAIGGALVGLVLGYFF. The Extracellular segment spans residues 217-218; it reads SQ. A helical membrane pass occupies residues 219-239; it reads VIRVFDDYPLEVAFSALLFFG. The Cytoplasmic portion of the chain corresponds to 240–241; the sequence is SY. A helical transmembrane segment spans residues 242–262; sequence FIAEHFHTSGVIAVVVGGFVF. The Extracellular segment spans residues 263–281; the sequence is GDYGAKIGMSKETKTNINT. Residues 282-302 form a helical membrane-spanning segment; the sequence is FWDSVTLIANALIFLMVGLEI. The Cytoplasmic segment spans residues 303–310; it reads RNIDLAGN. Residues 311-331 form a helical membrane-spanning segment; the sequence is WGVIVGAILIVLVGRTIAVYL. Topologically, residues 332–372 are extracellular; it reads GTGWVQELSSKERLLINWGGLRGSLSVALALSLPMDFAGRD. A helical membrane pass occupies residues 373 to 393; the sequence is QVLLLTFSVVLFSLIVQGLTL. Topologically, residues 394–403 are cytoplasmic; that stretch reads KPLIKKLGMI.

This sequence belongs to the monovalent cation:proton antiporter 1 (CPA1) transporter (TC 2.A.36) family.

It is found in the cell membrane. In terms of biological role, na(+)/H(+) antiporter that extrudes sodium in exchange for external protons. Can also transport lithium. This Halobacillus dabanensis protein is Na(+)/H(+) antiporter NhaH (nhaH).